The chain runs to 283 residues: 4-diphosphocytidyl-2-C-methyl-D-erythritol kinase (283 aa).

Lysine 11 is an active-site residue. 94–104 (PVAAGLAGGSA) is an ATP binding site. The active site involves aspartate 136.

The protein belongs to the GHMP kinase family. IspE subfamily.

The catalysed reaction is 4-CDP-2-C-methyl-D-erythritol + ATP = 4-CDP-2-C-methyl-D-erythritol 2-phosphate + ADP + H(+). It participates in isoprenoid biosynthesis; isopentenyl diphosphate biosynthesis via DXP pathway; isopentenyl diphosphate from 1-deoxy-D-xylulose 5-phosphate: step 3/6. Catalyzes the phosphorylation of the position 2 hydroxy group of 4-diphosphocytidyl-2C-methyl-D-erythritol. The protein is 4-diphosphocytidyl-2-C-methyl-D-erythritol kinase of Acetivibrio thermocellus (strain ATCC 27405 / DSM 1237 / JCM 9322 / NBRC 103400 / NCIMB 10682 / NRRL B-4536 / VPI 7372) (Clostridium thermocellum).